We begin with the raw amino-acid sequence, 432 residues long: Glucose-6-phosphate isomerase (432 aa).

The active-site Proton donor is Glu-283. Catalysis depends on residues His-304 and Lys-418.

It belongs to the GPI family.

The protein localises to the cytoplasm. The enzyme catalyses alpha-D-glucose 6-phosphate = beta-D-fructose 6-phosphate. It functions in the pathway carbohydrate biosynthesis; gluconeogenesis. It participates in carbohydrate degradation; glycolysis; D-glyceraldehyde 3-phosphate and glycerone phosphate from D-glucose: step 2/4. Catalyzes the reversible isomerization of glucose-6-phosphate to fructose-6-phosphate. The chain is Glucose-6-phosphate isomerase from Rubrobacter xylanophilus (strain DSM 9941 / JCM 11954 / NBRC 16129 / PRD-1).